Consider the following 174-residue polypeptide: ATP-dependent protease subunit HslV (174 aa).

Residue Thr2 is part of the active site. Na(+)-binding residues include Gly157, Cys160, and Thr163.

It belongs to the peptidase T1B family. HslV subfamily. A double ring-shaped homohexamer of HslV is capped on each side by a ring-shaped HslU homohexamer. The assembly of the HslU/HslV complex is dependent on binding of ATP.

The protein localises to the cytoplasm. The enzyme catalyses ATP-dependent cleavage of peptide bonds with broad specificity.. Allosterically activated by HslU binding. Functionally, protease subunit of a proteasome-like degradation complex believed to be a general protein degrading machinery. In Yersinia pseudotuberculosis serotype I (strain IP32953), this protein is ATP-dependent protease subunit HslV.